Reading from the N-terminus, the 71-residue chain is Translation initiation factor IF-1 (71 aa).

Residues Met1–Tyr71 enclose the S1-like domain.

This sequence belongs to the IF-1 family. As to quaternary structure, component of the 30S ribosomal translation pre-initiation complex which assembles on the 30S ribosome in the order IF-2 and IF-3, IF-1 and N-formylmethionyl-tRNA(fMet); mRNA recruitment can occur at any time during PIC assembly.

Its subcellular location is the cytoplasm. In terms of biological role, one of the essential components for the initiation of protein synthesis. Stabilizes the binding of IF-2 and IF-3 on the 30S subunit to which N-formylmethionyl-tRNA(fMet) subsequently binds. Helps modulate mRNA selection, yielding the 30S pre-initiation complex (PIC). Upon addition of the 50S ribosomal subunit IF-1, IF-2 and IF-3 are released leaving the mature 70S translation initiation complex. This chain is Translation initiation factor IF-1, found in Flavobacterium psychrophilum (strain ATCC 49511 / DSM 21280 / CIP 103535 / JIP02/86).